The following is a 256-amino-acid chain: Ribosomal RNA small subunit methyltransferase A (256 aa).

Asparagine 12, leucine 14, glycine 39, glutamate 60, aspartate 85, and asparagine 103 together coordinate S-adenosyl-L-methionine.

This sequence belongs to the class I-like SAM-binding methyltransferase superfamily. rRNA adenine N(6)-methyltransferase family. RsmA subfamily.

It localises to the cytoplasm. The catalysed reaction is adenosine(1518)/adenosine(1519) in 16S rRNA + 4 S-adenosyl-L-methionine = N(6)-dimethyladenosine(1518)/N(6)-dimethyladenosine(1519) in 16S rRNA + 4 S-adenosyl-L-homocysteine + 4 H(+). Its function is as follows. Specifically dimethylates two adjacent adenosines (A1518 and A1519) in the loop of a conserved hairpin near the 3'-end of 16S rRNA in the 30S particle. May play a critical role in biogenesis of 30S subunits. This is Ribosomal RNA small subunit methyltransferase A from Legionella pneumophila (strain Lens).